The sequence spans 506 residues: Cytochrome P450 monooxygenase tpcB (506 aa).

C450 provides a ligand contact to heme.

The protein belongs to the cytochrome P450 family. Heme is required as a cofactor.

It participates in secondary metabolite biosynthesis; terpenoid biosynthesis. Cytochrome P450 monooxygenase; part of the gene cluster that mediates the biosynthesis of terpestacin. The bifunctional terpene synthase tpcA converts isopentenyl diphosphate (IPP) and dimethylallyl diphosphate (DMAPP) into the sesterterpene preterpestacin I. The C-terminal prenyltransferase (PT) domain of tpcA catalyzes formation of GFPP, whereas the N-terminal terpene cyclase (TC) domain catalyzes the cyclization of GFPP into preterpestacin I. The cytochrome P450 monooxygenase tpcB then hydroxylates preterpestacin I to yield 24-hydroxypreterpstacin I (renamed as preterpestacin II) whereas the cytochrome P450 monooxygenase tpcC further hydroxylates preterpestacin II to yield 16,17-dihydroxypreterpestacin II (renamed as preterpestacin III). Finally, the FAD-dependent monooxygenase tpcD converts preterpestacin III into terpestacin. This is Cytochrome P450 monooxygenase tpcB from Cochliobolus heterostrophus (strain C5 / ATCC 48332 / race O) (Southern corn leaf blight fungus).